The primary structure comprises 140 residues: Small ribosomal subunit protein uS12 (140 aa).

D102 bears the 3-methylthioaspartic acid mark.

This sequence belongs to the universal ribosomal protein uS12 family. As to quaternary structure, part of the 30S ribosomal subunit. Contacts proteins S8 and S17. May interact with IF1 in the 30S initiation complex.

Functionally, with S4 and S5 plays an important role in translational accuracy. In terms of biological role, interacts with and stabilizes bases of the 16S rRNA that are involved in tRNA selection in the A site and with the mRNA backbone. Located at the interface of the 30S and 50S subunits, it traverses the body of the 30S subunit contacting proteins on the other side and probably holding the rRNA structure together. The combined cluster of proteins S8, S12 and S17 appears to hold together the shoulder and platform of the 30S subunit. This Bacillus cereus (strain G9842) protein is Small ribosomal subunit protein uS12.